A 130-amino-acid polypeptide reads, in one-letter code: Profilin-1 (130 aa).

This sequence belongs to the profilin family. Interacts with actin. Interacts with RHO1 (GTP-bound form).

The protein localises to the cytoplasm. The protein resides in the cytoskeleton. It localises to the cell projection. Its subcellular location is the phagocytic cup. It is found in the cytoplasmic vesicle. The protein localises to the phagosome. Binds to actin and affects the structure of the cytoskeleton. At high concentrations, profilin prevents the polymerization of actin, whereas it enhances it at low concentrations. By binding to PIP2, it inhibits the formation of IP3 and DG. This Entamoeba histolytica (strain ATCC 30459 / HM-1:IMSS / ABRM) protein is Profilin-1.